We begin with the raw amino-acid sequence, 134 residues long: Protein LctB (134 aa).

The protein is Protein LctB (lctB) of Geobacillus stearothermophilus (Bacillus stearothermophilus).